We begin with the raw amino-acid sequence, 536 residues long: Membrane protein insertase YidC (536 aa).

Residues 7–27 traverse the membrane as a helical segment; it reads IIAVVLSLFVLIGWSYLSEFM. The segment at 43 to 70 is disordered; sequence VQQKASEPVAQPVQTASAPAASSFAPTE. Over residues 58 to 68 the composition is skewed to low complexity; sequence ASAPAASSFAP. Helical transmembrane passes span 346–366, 415–435, and 495–515; these read GNYGVAIIILTILVKLLFWPL, GGCLPMLLQIPVFLGLYQGLL, and IMMFMPVVFTFMFLNFPAGLV.

Belongs to the OXA1/ALB3/YidC family. Type 1 subfamily. In terms of assembly, interacts with the Sec translocase complex via SecD. Specifically interacts with transmembrane segments of nascent integral membrane proteins during membrane integration.

Its subcellular location is the cell inner membrane. In terms of biological role, required for the insertion and/or proper folding and/or complex formation of integral membrane proteins into the membrane. Involved in integration of membrane proteins that insert both dependently and independently of the Sec translocase complex, as well as at least some lipoproteins. Aids folding of multispanning membrane proteins. The chain is Membrane protein insertase YidC from Oleidesulfovibrio alaskensis (strain ATCC BAA-1058 / DSM 17464 / G20) (Desulfovibrio alaskensis).